Reading from the N-terminus, the 876-residue chain is Nitrogen regulatory protein areA (876 aa).

Residues 1–11 are compositionally biased toward gly residues; the sequence is MSGLTLGGGSG. Disordered regions lie at residues 1–65, 137–159, 192–248, 393–413, 451–498, and 573–672; these read MSGL…PTDS, QERERAQQQARASSQKSPVPGMS, IPFS…ESEF, FSPPPSGYQSTASTPQPAYDG, YMYN…PNEF, and SADM…GPTT. Composition is skewed to polar residues over residues 198–211, 399–408, and 455–480; these read DHPSPSTTKASEAT, GYQSTASTPQ, and QGGSSQDITQQNAHMGAQSSSMQSPG. A compositionally biased stretch (basic and acidic residues) spans 602–611; that stretch reads VRNRDQDPRR. A compositionally biased stretch (polar residues) spans 615–640; sequence ARTSSTPNTAQLLRQSMQNQSSHTSP. Residues 673-697 form a GATA-type zinc finger; that stretch reads CTNCFTQTTPLWRRNPEGQPLCNAC. The segment at residues 721–742 is a DNA-binding region (H-T-H motif); sequence NRNSANSLAVGSSRVSKKSARK. Composition is skewed to polar residues over residues 724–734 and 742–766; these read SANSLAVGSSR and KNSVQQVTPTAPTSSRAQSNTTSES. A disordered region spans residues 724 to 856; sequence SANSLAVGSS…MPPAAVNPAN (133 aa). Low complexity-rich tracts occupy residues 782 to 798 and 828 to 855; these read PIAAAPPKSSSAATTSP and SPSSTSSGGRSKVVPLAPAMPPAAVNPA.

As to quaternary structure, interacts with nmrA.

It is found in the nucleus. Its function is as follows. Transcription activator that binds the consensus DNA element 5'-CGATAG-3' and mediates nitrogen metabolite repression. Activates the transcription of uapA. This is Nitrogen regulatory protein areA (areA) from Emericella nidulans (strain FGSC A4 / ATCC 38163 / CBS 112.46 / NRRL 194 / M139) (Aspergillus nidulans).